A 227-amino-acid chain; its full sequence is Phosphoribosylformylglycinamidine synthase subunit PurQ (227 aa).

The region spanning 2–226 (KFAVIQFPGS…VQAWKEEQVN (225 aa)) is the Glutamine amidotransferase type-1 domain. The active-site Nucleophile is cysteine 86. Catalysis depends on residues histidine 195 and glutamate 197.

In terms of assembly, part of the FGAM synthase complex composed of 1 PurL, 1 PurQ and 2 PurS subunits.

Its subcellular location is the cytoplasm. It catalyses the reaction N(2)-formyl-N(1)-(5-phospho-beta-D-ribosyl)glycinamide + L-glutamine + ATP + H2O = 2-formamido-N(1)-(5-O-phospho-beta-D-ribosyl)acetamidine + L-glutamate + ADP + phosphate + H(+). It carries out the reaction L-glutamine + H2O = L-glutamate + NH4(+). It functions in the pathway purine metabolism; IMP biosynthesis via de novo pathway; 5-amino-1-(5-phospho-D-ribosyl)imidazole from N(2)-formyl-N(1)-(5-phospho-D-ribosyl)glycinamide: step 1/2. Functionally, part of the phosphoribosylformylglycinamidine synthase complex involved in the purines biosynthetic pathway. Catalyzes the ATP-dependent conversion of formylglycinamide ribonucleotide (FGAR) and glutamine to yield formylglycinamidine ribonucleotide (FGAM) and glutamate. The FGAM synthase complex is composed of three subunits. PurQ produces an ammonia molecule by converting glutamine to glutamate. PurL transfers the ammonia molecule to FGAR to form FGAM in an ATP-dependent manner. PurS interacts with PurQ and PurL and is thought to assist in the transfer of the ammonia molecule from PurQ to PurL. In Listeria welshimeri serovar 6b (strain ATCC 35897 / DSM 20650 / CCUG 15529 / CIP 8149 / NCTC 11857 / SLCC 5334 / V8), this protein is Phosphoribosylformylglycinamidine synthase subunit PurQ.